The primary structure comprises 297 residues: 33 kDa chaperonin (297 aa).

2 disulfides stabilise this stretch: Cys234/Cys236 and Cys267/Cys270.

This sequence belongs to the HSP33 family. Post-translationally, under oxidizing conditions two disulfide bonds are formed involving the reactive cysteines. Under reducing conditions zinc is bound to the reactive cysteines and the protein is inactive.

The protein localises to the cytoplasm. Redox regulated molecular chaperone. Protects both thermally unfolding and oxidatively damaged proteins from irreversible aggregation. Plays an important role in the bacterial defense system toward oxidative stress. This Pseudoalteromonas atlantica (strain T6c / ATCC BAA-1087) protein is 33 kDa chaperonin.